We begin with the raw amino-acid sequence, 545 residues long: Chaperonin GroEL 2 (545 aa).

ATP is bound by residues threonine 29–proline 32, aspartate 86–threonine 90, glycine 413, asparagine 479–alanine 481, and aspartate 495.

Belongs to the chaperonin (HSP60) family. In terms of assembly, forms a cylinder of 14 subunits composed of two heptameric rings stacked back-to-back. Interacts with the co-chaperonin GroES.

Its subcellular location is the cytoplasm. The enzyme catalyses ATP + H2O + a folded polypeptide = ADP + phosphate + an unfolded polypeptide.. Its function is as follows. Together with its co-chaperonin GroES, plays an essential role in assisting protein folding. The GroEL-GroES system forms a nano-cage that allows encapsulation of the non-native substrate proteins and provides a physical environment optimized to promote and accelerate protein folding. The chain is Chaperonin GroEL 2 from Prochlorococcus marinus (strain MIT 9312).